Here is a 153-residue protein sequence, read N- to C-terminus: Ribosome maturation factor RimP (153 aa).

The protein belongs to the RimP family.

Its subcellular location is the cytoplasm. In terms of biological role, required for maturation of 30S ribosomal subunits. This is Ribosome maturation factor RimP from Synechococcus elongatus (strain ATCC 33912 / PCC 7942 / FACHB-805) (Anacystis nidulans R2).